Consider the following 119-residue polypeptide: NAD(P)H-quinone oxidoreductase subunit M (119 aa).

The protein belongs to the complex I NdhM subunit family. NDH-1 can be composed of about 15 different subunits; different subcomplexes with different compositions have been identified which probably have different functions.

Its subcellular location is the cellular thylakoid membrane. The catalysed reaction is a plastoquinone + NADH + (n+1) H(+)(in) = a plastoquinol + NAD(+) + n H(+)(out). It catalyses the reaction a plastoquinone + NADPH + (n+1) H(+)(in) = a plastoquinol + NADP(+) + n H(+)(out). Functionally, NDH-1 shuttles electrons from an unknown electron donor, via FMN and iron-sulfur (Fe-S) centers, to quinones in the respiratory and/or the photosynthetic chain. The immediate electron acceptor for the enzyme in this species is believed to be plastoquinone. Couples the redox reaction to proton translocation, and thus conserves the redox energy in a proton gradient. Cyanobacterial NDH-1 also plays a role in inorganic carbon-concentration. This Picosynechococcus sp. (strain ATCC 27264 / PCC 7002 / PR-6) (Agmenellum quadruplicatum) protein is NAD(P)H-quinone oxidoreductase subunit M.